The sequence spans 252 residues: Hydroxyacylglutathione hydrolase (252 aa).

Zn(2+) is bound by residues histidine 54, histidine 56, aspartate 58, histidine 59, histidine 111, aspartate 128, and histidine 166.

The protein belongs to the metallo-beta-lactamase superfamily. Glyoxalase II family. In terms of assembly, monomer. Zn(2+) is required as a cofactor.

It catalyses the reaction an S-(2-hydroxyacyl)glutathione + H2O = a 2-hydroxy carboxylate + glutathione + H(+). It functions in the pathway secondary metabolite metabolism; methylglyoxal degradation; (R)-lactate from methylglyoxal: step 2/2. Its function is as follows. Thiolesterase that catalyzes the hydrolysis of S-D-lactoyl-glutathione to form glutathione and D-lactic acid. In Vibrio cholerae serotype O1 (strain ATCC 39541 / Classical Ogawa 395 / O395), this protein is Hydroxyacylglutathione hydrolase.